Consider the following 338-residue polypeptide: Ferrochelatase (338 aa).

Fe cation contacts are provided by histidine 189 and glutamate 294.

It belongs to the ferrochelatase family.

Its subcellular location is the cytoplasm. It carries out the reaction heme b + 2 H(+) = protoporphyrin IX + Fe(2+). Its pathway is porphyrin-containing compound metabolism; protoheme biosynthesis; protoheme from protoporphyrin-IX: step 1/1. Its function is as follows. Catalyzes the ferrous insertion into protoporphyrin IX. The sequence is that of Ferrochelatase from Pseudomonas putida (strain ATCC 47054 / DSM 6125 / CFBP 8728 / NCIMB 11950 / KT2440).